Consider the following 85-residue polypeptide: Putative transmembrane protein ORF28 (85 aa).

A run of 2 helical transmembrane segments spans residues 32–52 (IMLL…VQIV) and 59–79 (LLSV…MLGI).

The protein resides in the host membrane. The chain is Putative transmembrane protein ORF28 from Haloarcula hispanica (His1V).